Here is a 144-residue protein sequence, read N- to C-terminus: Large ribosomal subunit protein uL15 (144 aa).

The segment at Met1–Gln54 is disordered. Residues Arg21 to Gly31 are compositionally biased toward gly residues.

The protein belongs to the universal ribosomal protein uL15 family. In terms of assembly, part of the 50S ribosomal subunit.

Its function is as follows. Binds to the 23S rRNA. This Salmonella enteritidis PT4 (strain P125109) protein is Large ribosomal subunit protein uL15.